A 1013-amino-acid polypeptide reads, in one-letter code: Poly [ADP-ribose] polymerase 1 (1013 aa).

Residue Ala-2 is modified to N-acetylalanine. Residues 9 to 93 (YRVQYAKSGR…KVKKTAEAGG (85 aa)) form a PARP-type 1 zinc finger. Zn(2+)-binding residues include Cys-21 and Cys-24. Ser-41 carries the post-translational modification Phosphoserine. Residues His-53 and Cys-56 each contribute to the Zn(2+) site. 2 positions are modified to N6-acetyllysine: Lys-97 and Lys-105. The PARP-type 2 zinc finger occupies 113-203 (FAAEYAKSNR…ALKKQLPAIK (91 aa)). Residues Cys-125 and Cys-128 each coordinate Zn(2+). Lys-131 is modified (N6-acetyllysine). Positions 159 and 162 each coordinate Zn(2+). Residues Ser-177, Ser-179, and Ser-185 each carry the phosphoserine modification. Lys-192 is covalently cross-linked (Glycyl lysine isopeptide (Lys-Gly) (interchain with G-Cter in SUMO2)). The segment at 200-226 (PAIKNEGKRKGDEVDGTDEVAKKKSRK) is disordered. A Glycyl lysine isopeptide (Lys-Gly) (interchain with G-Cter in SUMO1); alternate cross-link involves residue Lys-203. Lys-203 is covalently cross-linked (Glycyl lysine isopeptide (Lys-Gly) (interchain with G-Cter in SUMO2); alternate). Residues 204-226 (NEGKRKGDEVDGTDEVAKKKSRK) are compositionally biased toward basic and acidic residues. Short sequence motifs (nuclear localization signal) lie at residues 207 to 209 (KRK) and 221 to 226 (KKKSRK). The 135-residue stretch at 225-359 (RKETDKYSKL…VKKQDRIFPP (135 aa)) folds into the PADR1 zinc-binding domain. Residue Lys-249 forms a Glycyl lysine isopeptide (Lys-Gly) (interchain with G-Cter in SUMO2) linkage. Residues Ser-274 and Ser-277 each carry the phosphoserine modification. Residues 290–332 (GALLPCKECSGQLVFKSDAYYCTGDVTAWTKCMVKTQNPSRKE) form a zinc ribbon region. Residues Cys-295, Cys-298, Cys-311, and Cys-321 each coordinate Zn(2+). Positions 373–523 (VTSAPTAVNS…GVNKSEKRMK (151 aa)) are automodification domain. One can recognise a BRCT domain in the interval 385–476 (PADKPLSNMK…KSLQDLLSAH (92 aa)). Asp-387 is subject to PolyADP-ribosyl aspartic acid. PolyADP-ribosyl glutamic acid occurs at positions 407, 413, 435, 437, 444, 445, 448, and 456. Lys-467 is covalently cross-linked (Glycyl lysine isopeptide (Lys-Gly) (interchain with G-Cter in SUMO2)). Residue Glu-484 is modified to PolyADP-ribosyl glutamic acid. A Glycyl lysine isopeptide (Lys-Gly) (interchain with G-Cter in SUMO1); alternate cross-link involves residue Lys-486. Residue Lys-486 forms a Glycyl lysine isopeptide (Lys-Gly) (interchain with G-Cter in SUMO2); alternate linkage. 2 positions are modified to polyADP-ribosyl glutamic acid: Glu-488 and Glu-491. The interval 489-508 (PGEVVAPRGKSAAPSKKSKG) is disordered. Low complexity predominate over residues 494-503 (APRGKSAAPS). An ADP-ribosylserine mark is found at Ser-499, Ser-503, and Ser-506. Lys-511 participates in a covalent cross-link: Glycyl lysine isopeptide (Lys-Gly) (interchain with G-Cter in SUMO2). Glu-512 and Glu-513 each carry polyADP-ribosyl glutamic acid. The residue at position 518 (Ser-518) is an ADP-ribosylserine. Residue Glu-519 is modified to PolyADP-ribosyl glutamic acid. An N6-(ADP-ribosyl)lysine modification is found at Lys-520. A Glycyl lysine isopeptide (Lys-Gly) (interchain with G-Cter in SUMO2) cross-link involves residue Lys-527. The 97-residue stretch at 541–637 (SAHVLEKGGK…KNFTKYPKKF (97 aa)) folds into the WGR domain. Thr-593 is subject to Phosphothreonine. Residues Lys-599 and Lys-620 each carry the N6-acetyllysine modification. Residues 661–778 (KSKLPKPVQE…DIEVAYSLLR (118 aa)) enclose the PARP alpha-helical domain. Lys-747 is covalently cross-linked (Glycyl lysine isopeptide (Lys-Gly) (interchain with G-Cter in SUMO1); alternate). Residue Lys-747 forms a Glycyl lysine isopeptide (Lys-Gly) (interchain with G-Cter in SUMO2); alternate linkage. 2 positions are modified to phosphoserine: Ser-781 and Ser-785. The 227-residue stretch at 787 to 1013 (DPIDVNYEKL…LKFNFKTSLW (227 aa)) folds into the PARP catalytic domain. Residues 861–863 (HGS), Gly-870, Arg-877, and Ser-903 contribute to the NAD(+) site. Glu-987 (for poly [ADP-ribose] polymerase activity) is an active-site residue.

The protein belongs to the ARTD/PARP family. In terms of assembly, homodimer; PARP-type zinc-fingers from separate PARP1 molecules form a dimer module that specifically recognizes DNA strand breaks. Heterodimer; heterodimerizes with PARP2. Interacts (via the PARP catalytic domain) with HPF1. Interacts with NMNAT1. Interacts with nucleosomes; with a preference for nucleosomes containing H2A.X. Interacts with APTX. Component of a base excision repair (BER) complex, containing at least XRCC1, PARP1, PARP2, POLB and LRIG3. Interacts with SRY. The SWAP complex consists of NPM1, NCL, PARP1 and SWAP70. Interacts with TIAM2. Interacts with PARP3; leading to activate PARP1 in absence of DNA. Interacts (when poly-ADP-ribosylated) with CHD1L (via macro domain). Interacts with the DNA polymerase alpha catalytic subunit POLA1; this interaction functions as part of the control of replication fork progression. Interacts with EEF1A1 and TXK. Interacts with RNF4. Interacts with RNF146. Interacts with ZNF423. Interacts with APLF. Interacts with SNAI1 (via zinc fingers); the interaction requires SNAI1 to be poly-ADP-ribosylated and non-phosphorylated (active) by GSK3B. Interacts (when poly-ADP-ribosylated) with PARP9. Interacts with NR4A3; activates PARP1 by improving acetylation of PARP1 and suppressing the interaction between PARP1 and SIRT1. Interacts (via catalytic domain) with PUM3; the interaction inhibits the poly-ADP-ribosylation activity of PARP1 and the degradation of PARP1 by CASP3 following genotoxic stress. Interacts with ZNF365. Interacts with RRP1B. Interacts with TIMELESS; the interaction is direct. Interacts with CGAS; leading to impede the formation of the PARP1-TIMELESS complex. Interacts with KHDC3L, the interaction is increased following the formation of DNA double-strand breaks. Interacts (when auto-poly-ADP-ribosylated) with XRCC1; leading to inhibit PARP1 ADP-ribosyltransferase activity. Interacts with SPINDOC; promoting PARP1 ADP-ribosyltransferase activity. Interacts with BANF1; leading to inhibit PARP1 ADP-ribosyltransferase activity in response to oxidative DNA damage. Interacts (when sumoylated and ubiquitinated) with VCP/p97; leading to its extraction from chromatin. Interacts with YARS1; promoting PARP1 ADP-ribosyltransferase activity. Interacts with PACMP micropeptide; Interacts with PACMP micropeptide; interaction. Interacts (when poly-ADP-ribosylated) with isoform 1 of MACROH2A1; MACROH2A1 specifically binds to poly-ADP-ribose chains and inhibits PARP1 activity, limiting the consumption of nuclear NAD(+). Interacts with CARM1; promoting recruitment to replication forks. Interacts with RECQL. Interacts with ZNF32; the interaction reshapes ZNF432 interacting proteins. Interacts with TPRN; TPRN interacts with a number of DNA damage response proteins, is recruited to sites of DNA damage and may play a role in DNA damage repair. As to quaternary structure, interacts (when auto-poly-ADP-ribosylated) with AIFM1. Post-translationally, poly-ADP-ribosylated on serine, glutamate and aspartate residues by autocatalysis. Auto-ADP-ribosylation on serine takes place following interaction with HPF1. Auto poly-ADP-ribosylation on serine residues promotes its dissociation from chromatin. Poly-ADP-ribosylated by PARP2; poly-ADP-ribosylation mediates the recruitment of CHD1L to DNA damage sites. Mono-ADP-ribosylated at Lys-520 by SIRT6 in response to oxidative stress, promoting recruitment to double-strand breaks (DSBs) sites. S-nitrosylated, leading to inhibit transcription regulation activity. In terms of processing, phosphorylated at Thr-593 by PRKDC in response to DNA damage following virus infection, promoting its translocation to the cytosol. Phosphorylated by TXK. Post-translationally, proteolytically cleaved by caspase-3 (CASP3) and caspase-7 (CASP7) in response to apoptosis to generate the Poly [ADP-ribose] polymerase 1, processed N-terminus and Poly [ADP-ribose] polymerase 1, processed C-terminus forms. Sumoylated with SUMO1 or SUMO2 by PIAS4 following prolonged residence (trapping) to chromatin. Sumoylation promotes ubiquitination by RNF4 and removal from chromatin by VCP/p97. In terms of processing, ubiquitinated by RNF4 following sumoylation by PIAS4 in response to prolonged residence (trapping) to chromatin. Ubiquitination promotes removal from chromatin by VCP/p97. Widely expressed. Expression is correlated with proliferation, with higher levels occurring during early fetal development and organogenesis and in the highly proliferative cell compartments of adult. Expressed in B-cells that have been induced to switch to various Ig isotypes.

It localises to the chromosome. It is found in the nucleus. Its subcellular location is the nucleolus. The protein localises to the cytoplasm. The protein resides in the cytosol. It catalyses the reaction NAD(+) + (ADP-D-ribosyl)n-acceptor = nicotinamide + (ADP-D-ribosyl)n+1-acceptor + H(+).. The enzyme catalyses L-seryl-[protein] + NAD(+) = O-(ADP-D-ribosyl)-L-seryl-[protein] + nicotinamide + H(+). The catalysed reaction is L-aspartyl-[protein] + NAD(+) = 4-O-(ADP-D-ribosyl)-L-aspartyl-[protein] + nicotinamide. It carries out the reaction L-glutamyl-[protein] + NAD(+) = 5-O-(ADP-D-ribosyl)-L-glutamyl-[protein] + nicotinamide. It catalyses the reaction L-tyrosyl-[protein] + NAD(+) = O-(ADP-D-ribosyl)-L-tyrosyl-[protein] + nicotinamide + H(+). The enzyme catalyses L-histidyl-[protein] + NAD(+) = N(tele)-(ADP-D-ribosyl)-L-histidyl-[protein] + nicotinamide + H(+). Its activity is regulated as follows. ADP-ribosyltransferase activity is regulated via an allosteric activation mechanism. In absence of activation signal, PARP1 is autoinhibited by the PARP alpha-helical domain (also named HD region), which prevents effective NAD(+)-binding. Activity is highly stimulated by signals, such as DNA strand breaks. Binding to damaged DNA unfolds the PARP alpha-helical domain, relieving autoinhibition. Poly-ADP-ribosyltransferase activity is tightly regulated and PARP1 is removed from damaged chromatin following initial poly-ADP-ribosylation of chromatin to avoid prolonged residence (trapping) that has cytotoxic consequences. A number of factors (VCP/p97) or post-translational modifications (auto-poly-ADP-ribosylation or ubiquitination) promote PARP1 removal from chromatin. Functionally, poly-ADP-ribosyltransferase that mediates poly-ADP-ribosylation of proteins and plays a key role in DNA repair. Mediates glutamate, aspartate, serine, histidine or tyrosine ADP-ribosylation of proteins: the ADP-D-ribosyl group of NAD(+) is transferred to the acceptor carboxyl group of target residues and further ADP-ribosyl groups are transferred to the 2'-position of the terminal adenosine moiety, building up a polymer with an average chain length of 20-30 units. Serine ADP-ribosylation of proteins constitutes the primary form of ADP-ribosylation of proteins in response to DNA damage. Specificity for the different amino acids is conferred by interacting factors, such as HPF1 and NMNAT1. Following interaction with HPF1, catalyzes serine ADP-ribosylation of target proteins; HPF1 confers serine specificity by completing the PARP1 active site. Also catalyzes tyrosine ADP-ribosylation of target proteins following interaction with HPF1. Following interaction with NMNAT1, catalyzes glutamate and aspartate ADP-ribosylation of target proteins; NMNAT1 confers glutamate and aspartate specificity. PARP1 initiates the repair of DNA breaks: recognizes and binds DNA breaks within chromatin and recruits HPF1, licensing serine ADP-ribosylation of target proteins, such as histones (H2BS6ADPr and H3S10ADPr), thereby promoting decompaction of chromatin and the recruitment of repair factors leading to the reparation of DNA strand breaks. HPF1 initiates serine ADP-ribosylation but restricts the polymerase activity of PARP1 in order to limit the length of poly-ADP-ribose chains. In addition to base excision repair (BER) pathway, also involved in double-strand breaks (DSBs) repair: together with TIMELESS, accumulates at DNA damage sites and promotes homologous recombination repair by mediating poly-ADP-ribosylation. Mediates the poly-ADP-ribosylation of a number of proteins, including itself, APLF, CHFR and NFAT5. In addition to proteins, also able to ADP-ribosylate DNA: catalyzes ADP-ribosylation of DNA strand break termini containing terminal phosphates and a 2'-OH group in single- and double-stranded DNA, respectively. Required for PARP9 and DTX3L recruitment to DNA damage sites. PARP1-dependent PARP9-DTX3L-mediated ubiquitination promotes the rapid and specific recruitment of 53BP1/TP53BP1, UIMC1/RAP80, and BRCA1 to DNA damage sites. PARP1-mediated DNA repair in neurons plays a role in sleep: senses DNA damage in neurons and promotes sleep, facilitating efficient DNA repair. In addition to DNA repair, also involved in other processes, such as transcription regulation, programmed cell death, membrane repair, adipogenesis and innate immunity. Acts as a repressor of transcription: binds to nucleosomes and modulates chromatin structure in a manner similar to histone H1, thereby altering RNA polymerase II. Acts both as a positive and negative regulator of transcription elongation, depending on the context. Acts as a positive regulator of transcription elongation by mediating poly-ADP-ribosylation of NELFE, preventing RNA-binding activity of NELFE and relieving transcription pausing. Acts as a negative regulator of transcription elongation in response to DNA damage by catalyzing poly-ADP-ribosylation of CCNT1, disrupting the phase separation activity of CCNT1 and subsequent activation of CDK9. Involved in replication fork progression following interaction with CARM1: mediates poly-ADP-ribosylation at replication forks, slowing fork progression. Poly-ADP-ribose chains generated by PARP1 also play a role in poly-ADP-ribose-dependent cell death, a process named parthanatos. Also acts as a negative regulator of the cGAS-STING pathway. Acts by mediating poly-ADP-ribosylation of CGAS: PARP1 translocates into the cytosol following phosphorylation by PRKDC and catalyzes poly-ADP-ribosylation and inactivation of CGAS. Acts as a negative regulator of adipogenesis: catalyzes poly-ADP-ribosylation of histone H2B on 'Glu-35' (H2BE35ADPr) following interaction with NMNAT1, inhibiting phosphorylation of H2B at 'Ser-36' (H2BS36ph), thereby blocking expression of pro-adipogenetic genes. Involved in the synthesis of ATP in the nucleus, together with NMNAT1, PARG and NUDT5. Nuclear ATP generation is required for extensive chromatin remodeling events that are energy-consuming. Its function is as follows. Promotes AIFM1-mediated apoptosis. This form, which translocates into the cytoplasm following cleavage by caspase-3 (CASP3) and caspase-7 (CASP7) in response to apoptosis, is auto-poly-ADP-ribosylated and serves as a poly-ADP-ribose carrier to induce AIFM1-mediated apoptosis. This cleavage form irreversibly binds to DNA breaks and interferes with DNA repair, promoting DNA damage-induced apoptosis. This Mus musculus (Mouse) protein is Poly [ADP-ribose] polymerase 1 (Parp1).